Reading from the N-terminus, the 91-residue chain is UPF0250 protein NMC1112 (91 aa).

Belongs to the UPF0250 family.

The protein is UPF0250 protein NMC1112 of Neisseria meningitidis serogroup C / serotype 2a (strain ATCC 700532 / DSM 15464 / FAM18).